A 74-amino-acid polypeptide reads, in one-letter code: uncharacterized protein (74 aa).

2 consecutive transmembrane segments (helical) span residues 3–23 (YSAL…CFSF) and 35–55 (ILFF…MLLT).

Its subcellular location is the cell membrane. This is an uncharacterized protein from Mycoplasma genitalium (strain ATCC 33530 / DSM 19775 / NCTC 10195 / G37) (Mycoplasmoides genitalium).